Consider the following 868-residue polypeptide: Muscle, skeletal receptor tyrosine-protein kinase (868 aa).

The signal sequence occupies residues 1 to 21 (MRELVNIPLLQMLTLVAFSGT). Residues 22 to 494 (EKLPKAPVIT…FAVSPAYSMT (473 aa)) lie on the Extracellular side of the membrane. Ig-like domains follow at residues 28–116 (PVIT…GALQ), 121–205 (PKIT…KLVK), and 212–302 (ARIL…ATVS). Disulfide bonds link cysteine 49-cysteine 99, cysteine 98-cysteine 112, and cysteine 142-cysteine 190. Asparagine 222 is a glycosylation site (N-linked (GlcNAc...) asparagine). 6 disulfides stabilise this stretch: cysteine 233-cysteine 282, cysteine 317-cysteine 382, cysteine 325-cysteine 375, cysteine 366-cysteine 406, cysteine 394-cysteine 447, and cysteine 398-cysteine 434. Positions 312–450 (DSQGYCAQYR…HRDPTACTRL (139 aa)) constitute an FZ domain. Asparagine 338 is a glycosylation site (N-linked (GlcNAc...) asparagine). Asparagine 459 is a glycosylation site (N-linked (GlcNAc...) asparagine). Residues 495-515 (VIISIVSSFALFALLTIATLY) form a helical membrane-spanning segment. Residues 516-868 (CCRRRKEWKN…CERAEGTVGV (353 aa)) are Cytoplasmic-facing. At tyrosine 553 the chain carries Phosphotyrosine; by autocatalysis. Positions 574 to 855 (IEYVRDIGEG…PSFCSIHRIL (282 aa)) constitute a Protein kinase domain. ATP contacts are provided by residues 580–588 (IGEGAFGRV) and lysine 608. 2 positions are modified to phosphoserine; by CK2: serine 680 and serine 697. The active-site Proton acceptor is aspartate 724. Tyrosine 754 carries the post-translational modification Phosphotyrosine; by autocatalysis.

Belongs to the protein kinase superfamily. Tyr protein kinase family. Monomer. Homodimer. Interacts with LRP4; the heterodimer forms an AGRIN receptor complex that binds AGRIN resulting in activation of MUSK. Forms a heterotetramer composed of 2 DOK7 and 2 MUSK molecules which facilitates MUSK trans-autophosphorylation on tyrosine residue and activation. Interacts (via cytoplasmic part) with DOK7 (via IRS-type PTB domain); requires MUSK phosphorylation. Interacts with DVL1 (via DEP domain); the interaction is direct and mediates the formation of a DVL1, MUSK and PAK1 ternary complex involved in AChR clustering. Interacts with PDZRN3; this interaction is enhanced by agrin. Interacts with FNTA; the interaction is direct and mediates AGRIN-induced phosphorylation and activation of FNTA. Interacts with CSNK2B; mediates regulation by CK2. Interacts (via the cytoplasmic domain) with DNAJA3. Interacts with NSF; may regulate MUSK endocytosis and activity. Interacts with CAV3; may regulate MUSK signaling. Interacts with RNF31. The cofactor is Mg(2+). Post-translationally, ubiquitinated by PDZRN3. Ubiquitination promotes endocytosis and lysosomal degradation. In terms of processing, phosphorylated. Phosphorylation is induced by AGRIN. Autophosphorylated. Autophosphorylation at Tyr-553 is required for interaction with DOK7 which in turn stimulates the phosphorylation and the activation of MUSK. Neddylated. Expressed preferentially in skeletal muscle.

Its subcellular location is the postsynaptic cell membrane. The enzyme catalyses L-tyrosyl-[protein] + ATP = O-phospho-L-tyrosyl-[protein] + ADP + H(+). Positively regulated by CK2. Receptor tyrosine kinase which plays a central role in the formation and the maintenance of the neuromuscular junction (NMJ), the synapse between the motor neuron and the skeletal muscle. Recruitment of AGRIN by LRP4 to the MUSK signaling complex induces phosphorylation and activation of MUSK, the kinase of the complex. The activation of MUSK in myotubes regulates the formation of NMJs through the regulation of different processes including the specific expression of genes in subsynaptic nuclei, the reorganization of the actin cytoskeleton and the clustering of the acetylcholine receptors (AChR) in the postsynaptic membrane. May regulate AChR phosphorylation and clustering through activation of ABL1 and Src family kinases which in turn regulate MUSK. DVL1 and PAK1 that form a ternary complex with MUSK are also important for MUSK-dependent regulation of AChR clustering. May positively regulate Rho family GTPases through FNTA. Mediates the phosphorylation of FNTA which promotes prenylation, recruitment to membranes and activation of RAC1 a regulator of the actin cytoskeleton and of gene expression. Other effectors of the MUSK signaling include DNAJA3 which functions downstream of MUSK. May also play a role within the central nervous system by mediating cholinergic responses, synaptic plasticity and memory formation. This is Muscle, skeletal receptor tyrosine-protein kinase (Musk) from Mus musculus (Mouse).